We begin with the raw amino-acid sequence, 592 residues long: MQQKIRSPFVVVMGHVDVGKTLLLDKIRGTSVAYREPGMITQHIGMSLVPWPAVEKFAGPLVDRLKLRGRIWIPGFLFIDTPGHAAFSNLRKRGGSVADLAILVVDITSGLEDQGVESLKLIQSRGVPFVIAANKLDRIYGWKSVENRPFLFAVEEQEWHAVATLEEQIGKLITQLANLGIDADRYDRVRDFSKQVPIVPTSAVTGEGVADLLLVLAGVSQRFIPREKLQVRDGPARGVVMEVKEERGLGVVADVILYDGKLRKGDVIVTAGLDGSRQAKVRMLIMPKSLEEMRDPEDKFMAVQEVEAAAGVRVVAEGLEGVVAGAPLLAVWDPKDLPEALKSVGEEIAEIKIESDKEGVIVRADTFGTLESIILFLRQQGVPVRKADVGPPTHKDVVEAVLSRRKNPAYGAILAFNVKVPPEVETEAQSSGVKIIRGEILYRIFDEYVKWSTEVKTKTVEQVLSQLTRPAKIQILPGYVFRRSDPAIVGVKVLAGTLKPGVTLAKDGREVGKVMQIQRQGKPVAEAVAGDEVAISIQGDVIVGRQIKEGDVLYVYIPDEQARQWLFRYKQYLRKDEVEALEEYLKTRKKSA.

Residues isoleucine 5 to arginine 226 enclose the tr-type G domain. Residues glycine 14–threonine 21 form a G1 region. Glycine 14 to threonine 21 is a binding site for GTP. A G2 region spans residues methionine 39 to histidine 43. Positions aspartate 80 to glycine 83 are G3. GTP contacts are provided by residues aspartate 80 to histidine 84 and asparagine 134 to aspartate 137. Positions asparagine 134–aspartate 137 are G4. The interval serine 202 to valine 204 is G5.

The protein belongs to the TRAFAC class translation factor GTPase superfamily. Classic translation factor GTPase family. IF-2 subfamily.

Function in general translation initiation by promoting the binding of the formylmethionine-tRNA to ribosomes. Seems to function along with eIF-2. This chain is Probable translation initiation factor IF-2, found in Pyrobaculum calidifontis (strain DSM 21063 / JCM 11548 / VA1).